A 440-amino-acid chain; its full sequence is Thymidine phosphorylase (440 aa).

This sequence belongs to the thymidine/pyrimidine-nucleoside phosphorylase family. In terms of assembly, homodimer.

The catalysed reaction is thymidine + phosphate = 2-deoxy-alpha-D-ribose 1-phosphate + thymine. Its pathway is pyrimidine metabolism; dTMP biosynthesis via salvage pathway; dTMP from thymine: step 1/2. The enzymes which catalyze the reversible phosphorolysis of pyrimidine nucleosides are involved in the degradation of these compounds and in their utilization as carbon and energy sources, or in the rescue of pyrimidine bases for nucleotide synthesis. The chain is Thymidine phosphorylase from Shigella boydii serotype 4 (strain Sb227).